Here is a 180-residue protein sequence, read N- to C-terminus: Adenine phosphoribosyltransferase (180 aa).

An N-acetylalanine modification is found at A2. S15 and S30 each carry phosphoserine. Phosphotyrosine is present on Y60. S66 carries the phosphoserine modification. At T135 the chain carries Phosphothreonine.

The protein belongs to the purine/pyrimidine phosphoribosyltransferase family. As to quaternary structure, homodimer.

The protein localises to the cytoplasm. It catalyses the reaction AMP + diphosphate = 5-phospho-alpha-D-ribose 1-diphosphate + adenine. The protein operates within purine metabolism; AMP biosynthesis via salvage pathway; AMP from adenine: step 1/1. Functionally, catalyzes a salvage reaction resulting in the formation of AMP, that is energically less costly than de novo synthesis. This chain is Adenine phosphoribosyltransferase, found in Bos taurus (Bovine).